A 63-amino-acid chain; its full sequence is Large ribosomal subunit protein uL29 (63 aa).

This sequence belongs to the universal ribosomal protein uL29 family.

The sequence is that of Large ribosomal subunit protein uL29 from Escherichia coli O8 (strain IAI1).